The chain runs to 322 residues: Tubulin alpha-4 chain (322 aa).

Positions 15, 19, 20, 54, 81, and 103 each coordinate GTP. Glu-129 is a catalytic residue.

Belongs to the tubulin family. As to quaternary structure, dimer of alpha and beta chains. A typical microtubule is a hollow water-filled tube with an outer diameter of 25 nm and an inner diameter of 15 nM. Alpha-beta heterodimers associate head-to-tail to form protofilaments running lengthwise along the microtubule wall with the beta-tubulin subunit facing the microtubule plus end conferring a structural polarity. Microtubules usually have 13 protofilaments but different protofilament numbers can be found in some organisms and specialized cells. Mg(2+) serves as cofactor. In terms of processing, some glutamate residues at the C-terminus are polyglycylated, resulting in polyglycine chains on the gamma-carboxyl group. Glycylation is mainly limited to tubulin incorporated into axonemes (cilia and flagella) whereas glutamylation is prevalent in neuronal cells, centrioles, axonemes, and the mitotic spindle. Both modifications can coexist on the same protein on adjacent residues, and lowering polyglycylation levels increases polyglutamylation, and reciprocally. The precise function of polyglycylation is still unclear. Post-translationally, some glutamate residues at the C-terminus are polyglutamylated, resulting in polyglutamate chains on the gamma-carboxyl group. Polyglutamylation plays a key role in microtubule severing by spastin (SPAST). SPAST preferentially recognizes and acts on microtubules decorated with short polyglutamate tails: severing activity by SPAST increases as the number of glutamates per tubulin rises from one to eight, but decreases beyond this glutamylation threshold.

Its subcellular location is the cytoplasm. The protein resides in the cytoskeleton. The enzyme catalyses GTP + H2O = GDP + phosphate + H(+). Its function is as follows. Tubulin is the major constituent of microtubules, a cylinder consisting of laterally associated linear protofilaments composed of alpha- and beta-tubulin heterodimers. Microtubules grow by the addition of GTP-tubulin dimers to the microtubule end, where a stabilizing cap forms. Below the cap, tubulin dimers are in GDP-bound state, owing to GTPase activity of alpha-tubulin. The polypeptide is Tubulin alpha-4 chain (Gallus gallus (Chicken)).